The following is a 576-amino-acid chain: Flagellin B (576 aa).

Belongs to the bacterial flagellin family. In terms of assembly, heteromer of FlaA and FlaB. Interacts with FliW. Interacts with FliS.

It is found in the secreted. The protein localises to the bacterial flagellum. Its function is as follows. Flagellin is the subunit protein which polymerizes to form the filaments of bacterial flagella. In Campylobacter jejuni subsp. jejuni serotype O:6 (strain 81116 / NCTC 11828), this protein is Flagellin B (flaB).